A 385-amino-acid polypeptide reads, in one-letter code: Mannitol-1-phosphate 5-dehydrogenase (385 aa).

Residue 3-14 (ALQFGAGNIGRG) coordinates NAD(+).

It belongs to the mannitol dehydrogenase family.

It catalyses the reaction D-mannitol 1-phosphate + NAD(+) = beta-D-fructose 6-phosphate + NADH + H(+). The polypeptide is Mannitol-1-phosphate 5-dehydrogenase (Buchnera aphidicola subsp. Acyrthosiphon pisum (strain Tuc7)).